We begin with the raw amino-acid sequence, 375 residues long: Queuine tRNA-ribosyltransferase (375 aa).

Catalysis depends on aspartate 90, which acts as the Proton acceptor. Residues 90–94 (DSGGF), aspartate 144, glutamine 193, and glycine 220 each bind substrate. The interval 251–257 (GVGTPED) is RNA binding. Aspartate 270 functions as the Nucleophile in the catalytic mechanism. Residues 275 to 279 (TRNAR) are RNA binding; important for wobble base 34 recognition. Zn(2+) contacts are provided by cysteine 308, cysteine 310, cysteine 313, and histidine 339.

This sequence belongs to the queuine tRNA-ribosyltransferase family. As to quaternary structure, homodimer. Within each dimer, one monomer is responsible for RNA recognition and catalysis, while the other monomer binds to the replacement base PreQ1. Zn(2+) is required as a cofactor.

It carries out the reaction 7-aminomethyl-7-carbaguanine + guanosine(34) in tRNA = 7-aminomethyl-7-carbaguanosine(34) in tRNA + guanine. It participates in tRNA modification; tRNA-queuosine biosynthesis. Catalyzes the base-exchange of a guanine (G) residue with the queuine precursor 7-aminomethyl-7-deazaguanine (PreQ1) at position 34 (anticodon wobble position) in tRNAs with GU(N) anticodons (tRNA-Asp, -Asn, -His and -Tyr). Catalysis occurs through a double-displacement mechanism. The nucleophile active site attacks the C1' of nucleotide 34 to detach the guanine base from the RNA, forming a covalent enzyme-RNA intermediate. The proton acceptor active site deprotonates the incoming PreQ1, allowing a nucleophilic attack on the C1' of the ribose to form the product. After dissociation, two additional enzymatic reactions on the tRNA convert PreQ1 to queuine (Q), resulting in the hypermodified nucleoside queuosine (7-(((4,5-cis-dihydroxy-2-cyclopenten-1-yl)amino)methyl)-7-deazaguanosine). The polypeptide is Queuine tRNA-ribosyltransferase (Herminiimonas arsenicoxydans).